A 124-amino-acid polypeptide reads, in one-letter code: Fluoride-specific ion channel FluC 1 (124 aa).

4 consecutive transmembrane segments (helical) span residues 1–21 (MCAV…ALGA), 30–50 (LWPG…LLGY), 64–84 (FLGV…VDAV), and 93–113 (LYVV…MLAG). Positions 71 and 74 each coordinate Na(+).

The protein belongs to the fluoride channel Fluc/FEX (TC 1.A.43) family.

It localises to the cell membrane. It catalyses the reaction fluoride(in) = fluoride(out). Na(+) is not transported, but it plays an essential structural role and its presence is essential for fluoride channel function. Functionally, fluoride-specific ion channel. Important for reducing fluoride concentration in the cell, thus reducing its toxicity. The protein is Fluoride-specific ion channel FluC 1 of Rhodococcus jostii (strain RHA1).